Reading from the N-terminus, the 148-residue chain is UPAR/Ly6 domain-containing protein bero (148 aa).

Residues 1 to 23 (MVSALKCSLAVAVMISLACSAYA) form the signal peptide. Intrachain disulfides connect C26-C72, C29-C37, C51-C90, C102-C116, and C119-C124. N68 carries N-linked (GlcNAc...) asparagine glycosylation. The N-linked (GlcNAc...) asparagine glycan is linked to N125. N125 carries the GPI-anchor amidated asparagine lipid modification. The propeptide at 126–148 (GSSSLAPIAGAILLFFGVARLLA) is removed in mature form. A helical membrane pass occupies residues 128 to 148 (SSLAPIAGAILLFFGVARLLA).

It belongs to the quiver family.

It localises to the cell membrane. Its subcellular location is the membrane. The protein resides in the perikaryon. It is found in the cell projection. The protein localises to the neuron projection. Its function is as follows. Necessary for the maintenance of persistent fluctuating activities and suppression of acute evoked activities in abdominal leucokinin-producing (ABLK) neurons to negatively regulate neuron excitability involved in nociceptive (perception of pain) behavioral responses. The chain is UPAR/Ly6 domain-containing protein bero from Drosophila melanogaster (Fruit fly).